Reading from the N-terminus, the 246-residue chain is Cell division protein ZapD (246 aa).

Belongs to the ZapD family. Interacts with FtsZ.

Its subcellular location is the cytoplasm. In terms of biological role, cell division factor that enhances FtsZ-ring assembly. Directly interacts with FtsZ and promotes bundling of FtsZ protofilaments, with a reduction in FtsZ GTPase activity. The sequence is that of Cell division protein ZapD from Vibrio vulnificus (strain CMCP6).